A 314-amino-acid polypeptide reads, in one-letter code: Methionyl-tRNA formyltransferase (314 aa).

112–115 is a (6S)-5,6,7,8-tetrahydrofolate binding site; the sequence is SLLP.

Belongs to the Fmt family.

The enzyme catalyses L-methionyl-tRNA(fMet) + (6R)-10-formyltetrahydrofolate = N-formyl-L-methionyl-tRNA(fMet) + (6S)-5,6,7,8-tetrahydrofolate + H(+). Attaches a formyl group to the free amino group of methionyl-tRNA(fMet). The formyl group appears to play a dual role in the initiator identity of N-formylmethionyl-tRNA by promoting its recognition by IF2 and preventing the misappropriation of this tRNA by the elongation apparatus. The polypeptide is Methionyl-tRNA formyltransferase (Tolumonas auensis (strain DSM 9187 / NBRC 110442 / TA 4)).